We begin with the raw amino-acid sequence, 314 residues long: 3'-5' exoribonuclease YhaM (314 aa).

The HD domain maps to 163–279; it reads HVVSMLDLAK…LHYIDNLDAK (117 aa).

It belongs to the YhaM family.

Shows a 3'-5' exoribonuclease activity. This chain is 3'-5' exoribonuclease YhaM, found in Bacillus cereus (strain AH187).